Reading from the N-terminus, the 147-residue chain is NADH-ubiquinone oxidoreductase chain 3 (147 aa).

Transmembrane regions (helical) follow at residues Leu-6 to Ala-26, Ala-60 to Leu-80, and Thr-84 to Phe-104.

The protein belongs to the complex I subunit 3 family.

It is found in the mitochondrion membrane. The catalysed reaction is a ubiquinone + NADH + 5 H(+)(in) = a ubiquinol + NAD(+) + 4 H(+)(out). Core subunit of the mitochondrial membrane respiratory chain NADH dehydrogenase (Complex I) that is believed to belong to the minimal assembly required for catalysis. Complex I functions in the transfer of electrons from NADH to the respiratory chain. The immediate electron acceptor for the enzyme is believed to be ubiquinone. This is NADH-ubiquinone oxidoreductase chain 3 (ndh-3) from Neurospora crassa (strain ATCC 24698 / 74-OR23-1A / CBS 708.71 / DSM 1257 / FGSC 987).